The chain runs to 60 residues: UPF0434 protein Spro_1718 (60 aa).

The protein belongs to the UPF0434 family.

The protein is UPF0434 protein Spro_1718 of Serratia proteamaculans (strain 568).